A 199-amino-acid chain; its full sequence is Peptidyl-tRNA hydrolase (199 aa).

Tyrosine 18 provides a ligand contact to tRNA. Catalysis depends on histidine 23, which acts as the Proton acceptor. Tyrosine 72, asparagine 74, and asparagine 120 together coordinate tRNA.

It belongs to the PTH family. As to quaternary structure, monomer.

It localises to the cytoplasm. It carries out the reaction an N-acyl-L-alpha-aminoacyl-tRNA + H2O = an N-acyl-L-amino acid + a tRNA + H(+). Its function is as follows. Hydrolyzes ribosome-free peptidyl-tRNAs (with 1 or more amino acids incorporated), which drop off the ribosome during protein synthesis, or as a result of ribosome stalling. In terms of biological role, catalyzes the release of premature peptidyl moieties from peptidyl-tRNA molecules trapped in stalled 50S ribosomal subunits, and thus maintains levels of free tRNAs and 50S ribosomes. The sequence is that of Peptidyl-tRNA hydrolase from Bifidobacterium animalis subsp. lactis (strain AD011).